A 378-amino-acid polypeptide reads, in one-letter code: Chlorophyll synthase, chloroplastic (378 aa).

The N-terminal 45 residues, 1 to 45 (MATSHPLAAAAATSSSSATFRPPLRFLSSPPSSLTLNRRRSFPVV), are a transit peptide targeting the chloroplast. 7 consecutive transmembrane segments (helical) span residues 173 to 193 (VITQ…LLDI), 199 to 219 (FPII…YSAP), 232 to 252 (FALG…LFGT), 257 to 277 (IVVL…VNDF), 302 to 322 (WICV…LLST), 327 to 347 (YALA…QYFL), and 357 to 377 (YQAS…LATS).

The protein belongs to the UbiA prenyltransferase family. Chlorophyll synthase subfamily. Requires Mg(2+) as cofactor. Zn(2+) is required as a cofactor. The cofactor is Mn(2+).

Its subcellular location is the plastid. It is found in the chloroplast membrane. The catalysed reaction is phytyl diphosphate + chlorophyllide a + H(+) = chlorophyll a + diphosphate. Its activity is regulated as follows. Inhibited by N-phenylmaleimide (NPM) and diacetyl. Functionally, involved in one of the last steps of the biosynthesis of chlorophyll a. Catalyzes the esterification of chlorophillide a with either geranylgeranyldiphosphate (GGPP) or phytyldiphosphate (PhyPP). May also use with a lower efficiency the monophosphates GGMP and PhyMP, but not the non-phosphorylated alcohols geranylgeraniol and phytol. The tetraprenyl diphosphate must bind to the enzyme as the first substrate and esterification occurs when this pre-loaded enzyme meets the second substrate, chlorophyllide. In Avena sativa (Oat), this protein is Chlorophyll synthase, chloroplastic (CHLG).